Reading from the N-terminus, the 156-residue chain is Endoribonuclease YbeY (156 aa).

Zn(2+)-binding residues include His-122, His-126, and His-132.

It belongs to the endoribonuclease YbeY family. Zn(2+) serves as cofactor.

The protein localises to the cytoplasm. In terms of biological role, single strand-specific metallo-endoribonuclease involved in late-stage 70S ribosome quality control and in maturation of the 3' terminus of the 16S rRNA. The chain is Endoribonuclease YbeY from Bacillus cytotoxicus (strain DSM 22905 / CIP 110041 / 391-98 / NVH 391-98).